The primary structure comprises 305 residues: Ribonuclease BN (305 aa).

His64, His66, Asp68, His69, His141, Asp212, and His270 together coordinate Zn(2+). The active-site Proton acceptor is Asp68.

It belongs to the RNase Z family. RNase BN subfamily. In terms of assembly, homodimer. The cofactor is Zn(2+).

Its function is as follows. Zinc phosphodiesterase, which has both exoribonuclease and endoribonuclease activities. In Shigella boydii serotype 18 (strain CDC 3083-94 / BS512), this protein is Ribonuclease BN.